A 294-amino-acid polypeptide reads, in one-letter code: Ventral anterior homeobox 2b (294 aa).

Basic and acidic residues predominate over residues 1 to 10; that stretch reads MGDGVSEERS. Disordered stretches follow at residues 1–27, 43–65, 149–168, 190–223, and 272–294; these read MGDG…VRDR, KDIP…DSQS, RRTK…SSST, PAPP…PVIS, and SSAF…KSTS. Positions 98–157 form a DNA-binding region, homeobox; it reads PKRTRTSFTAEQLYRLELEFQRCQYVVGRERTELARQLNLSETQVKVWFQNRRTKQKKDQ. Basic and acidic residues predominate over residues 154–165; it reads KKDQSRDSEKRS. Over residues 197–219 the composition is skewed to low complexity; that stretch reads SSQNNMGTSSGNGTSLGTSGSTS. Residues 279–288 are compositionally biased toward basic and acidic residues; the sequence is TRLDRKDTAS.

This sequence belongs to the EMX homeobox family.

It is found in the nucleus. Functionally, transcription factor that may function in dorsoventral specification of the forebrain. Regulates the expression of Wnt signaling antagonists. The chain is Ventral anterior homeobox 2b (vax2-b) from Xenopus laevis (African clawed frog).